The sequence spans 1988 residues: Protein Ycf2 (1988 aa).

Residue 1337–1344 (GSIGTGRS) coordinates ATP. Residues 1377–1396 (SDDDSDDIDDSGDIDDSDDI) form a disordered region.

It belongs to the Ycf2 family.

The protein resides in the plastid. Its subcellular location is the chloroplast stroma. Its function is as follows. Probable ATPase of unknown function. Its presence in a non-photosynthetic plant (Epifagus virginiana) and experiments in tobacco indicate that it has an essential function which is probably not related to photosynthesis. The sequence is that of Protein Ycf2 from Cucumis sativus (Cucumber).